The chain runs to 144 residues: Large ribosomal subunit protein uL15 (144 aa).

The disordered stretch occupies residues 1–58; the sequence is MNLSNLRAPRKANEKKKRVGRGMGSGMGKTSARGHKGQRSRSGSRMMRGFEGGQMPLH. Residues 8–20 show a composition bias toward basic residues; the sequence is APRKANEKKKRVG. Over residues 40–49 the composition is skewed to low complexity; sequence SRSGSRMMRG.

The protein belongs to the universal ribosomal protein uL15 family. In terms of assembly, part of the 50S ribosomal subunit.

Binds to the 23S rRNA. This chain is Large ribosomal subunit protein uL15, found in Koribacter versatilis (strain Ellin345).